Reading from the N-terminus, the 257-residue chain is MRKRERENPCSICGHYHKYEEGEVCGVCGHCMPVSSDTVAPQQVHVSAFPSEILPEFLYLGSYDNASRSELLKTQGISRVLNTVPMCQNLYRNSFTYHGLDNEKVLQFDDAIKFLDQCEKDKARVLVHCMSGKSRSPAVVVAYLMKRKGWRLAESHQWVKQRRPSTDISPEFYQQLQEFEQGIFGSEMMSAMNINDAPTFGFGFPKIDNQAQAPVFNNAPTSSIFSSPASSIPPQEFTFGATPPKPTTGGDIAMDGS.

The Tyrosine-protein phosphatase domain occupies 49 to 185 (FPSEILPEFL…LQEFEQGIFG (137 aa)). C129 (phosphocysteine intermediate) is an active-site residue. Residues 235–257 (QEFTFGATPPKPTTGGDIAMDGS) are disordered.

It belongs to the protein-tyrosine phosphatase family. Interacts with SKP1A/ASK1 and with MPK12. Expressed in root tips and vasculature, cotyledons, stems, leaves vasculature and hydathodes, flowers, siliques, and seeds.

Its subcellular location is the nucleus. It catalyses the reaction O-phospho-L-tyrosyl-[protein] + H2O = L-tyrosyl-[protein] + phosphate. In terms of biological role, required for the transduction of auxin and abscisic acid (ABA) signaling pathways. Dephosphorylates and inactivates the MAP kinase MPK12. This chain is Protein-tyrosine-phosphatase IBR5 (IBR5), found in Arabidopsis thaliana (Mouse-ear cress).